Here is a 254-residue protein sequence, read N- to C-terminus: Protein PET122, mitochondrial (254 aa).

The N-terminal 8 residues, 1–8 (MLTITKRL), are a transit peptide targeting the mitochondrion. Positions 185–254 (QAAALALFGR…IKRRGFEINT (70 aa)) are essential for PET122 function.

Its subcellular location is the mitochondrion inner membrane. Required for expression of the mitochondrial gene for cytochrome c oxidase subunit 3 (COX3). PET122 seems to work by directly interacting with the small ribosomal subunit to promote translation initiation on the COX3 mRNA. In Saccharomyces cerevisiae (strain ATCC 204508 / S288c) (Baker's yeast), this protein is Protein PET122, mitochondrial (PET122).